The chain runs to 171 residues: L-methionine sulfoximine/L-methionine sulfone acetyltransferase (171 aa).

The N-acetyltransferase domain occupies 1–163; that stretch reads MTIRFADKAD…DLTFMQLQLD (163 aa). Substrate is bound by residues 72 to 74 and 82 to 84; these read RSF and EHS. Acetyl-CoA contacts are provided by residues 85–87, 93–98, Asn124, and Ser133; these read VYV and GKGLGR.

As to quaternary structure, homodimer.

The enzyme catalyses L-methionine sulfoximine + acetyl-CoA = N-acetyl-L-methionine sulfoximine + CoA + H(+). The catalysed reaction is L-methionine sulfone + acetyl-CoA = N-acetyl-L-methionine sulfone + CoA + H(+). Its function is as follows. Plays a role in the resistance against the toxic effects of L-methionine sulfoximine (MSX), a rare amino acid which inhibits glutamine synthetase (GlnA). Catalyzes the acetylation of MSX. It can also use L-methionine sulfone (MSO). Also catalyzes the acylation of free L-amino acids using an acyl-CoA as acyl donor. This is L-methionine sulfoximine/L-methionine sulfone acetyltransferase (yncA) from Salmonella typhimurium (strain LT2 / SGSC1412 / ATCC 700720).